A 234-amino-acid chain; its full sequence is Multicopy suppressor of SEC21 protein 28 (234 aa).

The Cytoplasmic segment spans residues 1 to 47 (MQTPPESTDVKLDTLNEPSAHLIEKNVALPKDIFRSYLSYWIYEIAR). Thr3 carries the post-translational modification Phosphothreonine. Residues 48 to 68 (YTPVMILSLVIGVLVLLIIFF) form a helical membrane-spanning segment. The Extracellular segment spans residues 69-72 (NDNE). The chain crosses the membrane as a helical span at residues 73-93 (ACVFNSAIFAFTSLVGLLIIL). At 94 to 234 (SDGNPKLVSR…NIDALLKKTE (141 aa)) the chain is on the cytoplasmic side. The interval 231-234 (KKTE) is COPI binding.

Belongs to the DUP/COS family. As to quaternary structure, interacts with MST27. Binds to coatomer proteins of COPI and SEC23/SEC24 of COPII coated vesicles.

Its subcellular location is the endoplasmic reticulum. The protein resides in the golgi apparatus. It is found in the cytoplasmic vesicle. It localises to the COPI-coated vesicle membrane. The protein localises to the COPII-coated vesicle membrane. Involved in protein trafficking vesicle formation, probably by stabilizing of coatomer at the Golgi membrane and thus allowing the efficient formation of COPI coated vesicles. The sequence is that of Multicopy suppressor of SEC21 protein 28 (MST28) from Saccharomyces cerevisiae (strain ATCC 204508 / S288c) (Baker's yeast).